Reading from the N-terminus, the 371-residue chain is Meiotic drive suppressor wtf18 (371 aa).

A run of 8 helical transmembrane segments spans residues 86-106 (FLLR…TAWV), 120-140 (AFSV…FCFF), 153-173 (VTVI…AQCV), 197-217 (DLVV…FGCV), 233-253 (CSIS…IWTL), 257-277 (LFGL…TKGL), 287-307 (ATGY…LFFY), and 321-341 (FIGN…GGIG).

It belongs to the WTF family. In terms of assembly, homomer. Interacts with other proteins that exhibit high sequence similarity.

The protein resides in the spore membrane. It localises to the vacuole membrane. Functionally, acts as a suppressor component of the dual wtf meiotic drive system, and can suppress but not confer meiotic drive by compatible poisons. Wtf meiotic drive systems promote unequal transmission of alleles from the parental zygote to progeny spores by encoding a poison and an antidote from the same locus; the poison is trans-acting and forms toxic aggregates in all spores within an ascus, wherease the antidote is spore-specific and targets aggregates for degradation by the vacuole. Meiotic drive by wtf systems therefore lead to poisoning of all progeny that do not inherit the dual poison/antidote allele, or express a compatible antidote. This Schizosaccharomyces kambucha (Fission yeast) protein is Meiotic drive suppressor wtf18.